Here is a 1179-residue protein sequence, read N- to C-terminus: ATP-dependent helicase/deoxyribonuclease subunit B (1179 aa).

Belongs to the helicase family. AddB/RexB type 2 subfamily. Heterodimer of AddA and RexB. The cofactor is Mg(2+).

Its function is as follows. The heterodimer acts as both an ATP-dependent DNA helicase and an ATP-dependent, dual-direction single-stranded exonuclease. Recognizes the chi site generating a DNA molecule suitable for the initiation of homologous recombination. This subunit has 5' -&gt; 3' nuclease activity but not helicase activity. This Lactobacillus delbrueckii subsp. bulgaricus (strain ATCC 11842 / DSM 20081 / BCRC 10696 / JCM 1002 / NBRC 13953 / NCIMB 11778 / NCTC 12712 / WDCM 00102 / Lb 14) protein is ATP-dependent helicase/deoxyribonuclease subunit B.